A 253-amino-acid chain; its full sequence is Mediator of RNA polymerase II transcription subunit 10 (253 aa).

3 disordered regions span residues 32-63 (YDTN…HASS), 88-109 (LPSS…TELE), and 206-253 (VEAT…QSGQ). The segment covering 34–47 (TNPSSSNNNTPTSS) has biased composition (low complexity). The segment covering 50–60 (SGGGGGGGGGH) has biased composition (gly residues). Residues 88–104 (LPSSPSSGPSNNQPQQG) show a composition bias toward low complexity. Gly residues predominate over residues 231–253 (SAGGEGQQGQGQGQQGQGQQSGQ).

This sequence belongs to the Mediator complex subunit 10 family. In terms of assembly, component of the Mediator complex.

It is found in the nucleus. Component of the Mediator complex, a coactivator involved in the regulated transcription of nearly all RNA polymerase II-dependent genes. Mediator functions as a bridge to convey information from gene-specific regulatory proteins to the basal RNA polymerase II transcription machinery. Mediator is recruited to promoters by direct interactions with regulatory proteins and serves as a scaffold for the assembly of a functional preinitiation complex with RNA polymerase II and the general transcription factors. This is Mediator of RNA polymerase II transcription subunit 10 (nut2) from Neurospora crassa (strain ATCC 24698 / 74-OR23-1A / CBS 708.71 / DSM 1257 / FGSC 987).